The sequence spans 421 residues: Non-homologous end-joining factor LIF1 (421 aa).

The segment at 1–196 (MSQLTEFISC…VEQLAREREL (196 aa)) is interaction with NEJ1. Positions 365–421 (GIQISAGRSDEDYGDISGSESETDASAGEKKSSNHSEQSGNDREPCLQTESETDIET) are disordered. Positions 391-409 (AGEKKSSNHSEQSGNDREP) are enriched in basic and acidic residues.

This sequence belongs to the XRCC4-XLF family. XLF subfamily. As to quaternary structure, interacts with DNL4 (via BRCT domain). Interacts (via N-terminus) with NEJ1 (via C-terminus); the interaction is direct. The DNL4-LIF1 complex interacts with POL4.

The protein resides in the cytoplasm. The protein localises to the nucleus. Involved in non-homologous repair of DNA double-strand breaks. Stabilizes DNL4. The sequence is that of Non-homologous end-joining factor LIF1 (LIF1) from Saccharomyces cerevisiae (strain ATCC 204508 / S288c) (Baker's yeast).